Reading from the N-terminus, the 728-residue chain is Polyribonucleotide nucleotidyltransferase (728 aa).

Residues Asp503 and Asp509 each coordinate Mg(2+). The KH domain occupies 570 to 629; that stretch reads PRLTTIKIPSDCIGMVIGKGGETIRGITEETGAEINIADDGTVTIACTTKEGTDAALATI. The region spanning 639–713 is the S1 motif domain; sequence GNIYVGKVRD…GKTKFALSIK (75 aa).

This sequence belongs to the polyribonucleotide nucleotidyltransferase family. The cofactor is Mg(2+).

It is found in the cytoplasm. The enzyme catalyses RNA(n+1) + phosphate = RNA(n) + a ribonucleoside 5'-diphosphate. Involved in mRNA degradation. Catalyzes the phosphorolysis of single-stranded polyribonucleotides processively in the 3'- to 5'-direction. The polypeptide is Polyribonucleotide nucleotidyltransferase (Chlorobium chlorochromatii (strain CaD3)).